Reading from the N-terminus, the 207-residue chain is Uracil phosphoribosyltransferase (207 aa).

5-phospho-alpha-D-ribose 1-diphosphate-binding positions include Arg-77, Arg-102, and 129 to 137 (DPMLATGGS). Residues Ile-192 and 197-199 (GDA) each bind uracil. 5-phospho-alpha-D-ribose 1-diphosphate is bound at residue Asp-198.

This sequence belongs to the UPRTase family. Requires Mg(2+) as cofactor.

It catalyses the reaction UMP + diphosphate = 5-phospho-alpha-D-ribose 1-diphosphate + uracil. Its pathway is pyrimidine metabolism; UMP biosynthesis via salvage pathway; UMP from uracil: step 1/1. With respect to regulation, allosterically activated by GTP. Functionally, catalyzes the conversion of uracil and 5-phospho-alpha-D-ribose 1-diphosphate (PRPP) to UMP and diphosphate. In Ureaplasma urealyticum serovar 10 (strain ATCC 33699 / Western), this protein is Uracil phosphoribosyltransferase.